The sequence spans 372 residues: NAD(P)H-quinone oxidoreductase subunit 1 (372 aa).

8 helical membrane-spanning segments follow: residues 27–47, 97–117, 128–148, 176–196, 204–224, 266–286, 308–328, and 347–367; these read IIWLPLPMLLVLVAAVVGVLV, ILFTAGPILVLVPVILSWLIV, VGIGIFLWIALSSIQPIGLLM, LALSVLAIVLMTNSLSTIDIV, ILSWNIWRQPVGFIVFWICAL, ILSALLVSILYLGGWGFPIPV, SIGIVMTVLKAYLLVFIAILL, and FLLPISLANLLITAGLKLAFP.

The protein belongs to the complex I subunit 1 family. In terms of assembly, NDH-1 is composed of at least 11 different subunits.

The protein localises to the cellular thylakoid membrane. It catalyses the reaction a plastoquinone + NADH + (n+1) H(+)(in) = a plastoquinol + NAD(+) + n H(+)(out). The enzyme catalyses a plastoquinone + NADPH + (n+1) H(+)(in) = a plastoquinol + NADP(+) + n H(+)(out). In terms of biological role, NDH-1 shuttles electrons from an unknown electron donor, via FMN and iron-sulfur (Fe-S) centers, to quinones in the respiratory and/or the photosynthetic chain. The immediate electron acceptor for the enzyme in this species is believed to be plastoquinone. Couples the redox reaction to proton translocation, and thus conserves the redox energy in a proton gradient. The sequence is that of NAD(P)H-quinone oxidoreductase subunit 1 from Prochlorococcus marinus (strain MIT 9215).